The primary structure comprises 658 residues: MPLFDLKSPYPPAGDQPQAIEALTKSLKNNNHYQTLVGVTGSGKTYTMANIIAQTNKPALIMSHNKTLCAQLYSEFKAFFPHNRVEYFISHFDYYQPESYIPRRDLFIEKDSSINDDLERLRLSATTSLLGYDDVIVIASVSANYGLGNPEEYLKVMEKIKVGEKRAYKSFLLKLVEMGYSRNEVVFDRGSFRATGECVDIFPAYNDAEFIRIEFFGDEIERIAVFDALERNEIKRLDSVMLYAASQFAVGSERLNLAVKSIEDELALRLKFFKEQDKMLEYNRLKQRTEYDLEMISATGVCKGIENYARHFTGKAPNETPFCLFDYLGIFEREFLVIVDESHVSLPQFGGMYAGDMSRKSVLVEYGFRLPSALDNRPLKFDEFIHKNCQFLFVSATPNKLELELSQKNVAEQIIRPTGLLDPKFEVRDSDKQVQDLFDEIKSVVARGERVLITTLTKKMAEELCKYYAEWGLKVRYMHSEIDAIERNHIIRSLRLKEFDVLIGINLLREGLDLPEVSLVAIMDADKEGFLRSETSLIQTMGRAARNANGKVLLYAKKTTQSMQKAFEITSYRRAKQEEFNKIHNITPKTVTRALEEELKLRDDEIKIAKALKKDKMPKSEREKIIKELDKKMRERAKNLDFEEAMRLRDEIAQLRTL.

Residues 25–416 (KSLKNNNHYQ…QKNVAEQIIR (392 aa)) enclose the Helicase ATP-binding domain. 38–45 (GVTGSGKT) provides a ligand contact to ATP. Positions 91–114 (HFDYYQPESYIPRRDLFIEKDSSI) match the Beta-hairpin motif. The region spanning 433–607 (QVQDLFDEIK…ELKLRDDEIK (175 aa)) is the Helicase C-terminal domain. Residues 623 to 658 (EKIIKELDKKMRERAKNLDFEEAMRLRDEIAQLRTL) enclose the UVR domain.

It belongs to the UvrB family. Forms a heterotetramer with UvrA during the search for lesions. Interacts with UvrC in an incision complex.

Its subcellular location is the cytoplasm. Functionally, the UvrABC repair system catalyzes the recognition and processing of DNA lesions. A damage recognition complex composed of 2 UvrA and 2 UvrB subunits scans DNA for abnormalities. Upon binding of the UvrA(2)B(2) complex to a putative damaged site, the DNA wraps around one UvrB monomer. DNA wrap is dependent on ATP binding by UvrB and probably causes local melting of the DNA helix, facilitating insertion of UvrB beta-hairpin between the DNA strands. Then UvrB probes one DNA strand for the presence of a lesion. If a lesion is found the UvrA subunits dissociate and the UvrB-DNA preincision complex is formed. This complex is subsequently bound by UvrC and the second UvrB is released. If no lesion is found, the DNA wraps around the other UvrB subunit that will check the other stand for damage. The protein is UvrABC system protein B of Helicobacter pylori (strain J99 / ATCC 700824) (Campylobacter pylori J99).